Consider the following 485-residue polypeptide: tRNA sulfurtransferase (485 aa).

Residues glutamate 63 to arginine 167 form the THUMP domain. ATP contacts are provided by residues leucine 185–isoleucine 186, lysine 267, glycine 289, and glutamine 298. Residues cysteine 346 and cysteine 458 are joined by a disulfide bond. Residues valine 406–proline 484 enclose the Rhodanese domain. Residue cysteine 458 is the Cysteine persulfide intermediate of the active site.

The protein belongs to the ThiI family.

The protein localises to the cytoplasm. It catalyses the reaction [ThiI sulfur-carrier protein]-S-sulfanyl-L-cysteine + a uridine in tRNA + 2 reduced [2Fe-2S]-[ferredoxin] + ATP + H(+) = [ThiI sulfur-carrier protein]-L-cysteine + a 4-thiouridine in tRNA + 2 oxidized [2Fe-2S]-[ferredoxin] + AMP + diphosphate. The catalysed reaction is [ThiS sulfur-carrier protein]-C-terminal Gly-Gly-AMP + S-sulfanyl-L-cysteinyl-[cysteine desulfurase] + AH2 = [ThiS sulfur-carrier protein]-C-terminal-Gly-aminoethanethioate + L-cysteinyl-[cysteine desulfurase] + A + AMP + 2 H(+). It functions in the pathway cofactor biosynthesis; thiamine diphosphate biosynthesis. Its function is as follows. Catalyzes the ATP-dependent transfer of a sulfur to tRNA to produce 4-thiouridine in position 8 of tRNAs, which functions as a near-UV photosensor. Also catalyzes the transfer of sulfur to the sulfur carrier protein ThiS, forming ThiS-thiocarboxylate. This is a step in the synthesis of thiazole, in the thiamine biosynthesis pathway. The sulfur is donated as persulfide by IscS. The polypeptide is tRNA sulfurtransferase (Shewanella loihica (strain ATCC BAA-1088 / PV-4)).